The chain runs to 299 residues: Prohibitin-2 (299 aa).

Alanine 2 carries the N-acetylalanine modification. The interval 19-49 is necessary for transcriptional repression; that stretch reads MGTALKLLLGAGAVAYGVRESVFTVEGGHRA. Position 128 is a phosphotyrosine (tyrosine 128). Lysine 147 carries the post-translational modification N6-acetyllysine. Positions 150–174 are necessary for transcriptional repression; that stretch reads ASQLITQRAQVSLLIRRELTERAKD. Serine 151 is subject to Phosphoserine. Residues 190–238 are a coiled coil; it reads SREYTAAVEAKQVAQQEAQRAQFLVEKAKQEQRQKIVQAEGEAEAAKML. N6-acetyllysine is present on residues lysine 200, lysine 236, lysine 250, and lysine 262.

The protein belongs to the prohibitin family. As to quaternary structure, the mitochondrial prohibitin complex consists of two subunits (PHB1 and PHB2), assembled into a membrane-associated ring-shaped supercomplex of approximately 1 mDa. Interacts with ESR1, HDAC1 and HDAC5. Interacts with ZNF703. Interacts with STOML2. Interacts with ARFGEF3. Interacts with SPHK2. Interacts with COX4I1; the interaction associates PHB2 with COX. Interacts with MAP1LC3B (membrane-bound form LC3-II); the interaction is direct and upon mitochondrial depolarization and proteasome-dependent outer membrane rupture. Interacts with IGFBP6 (via C-terminal domain). Interacts with CLPB. Interacts with CD86 (via cytoplasmic domain); the interactions increases after priming with CD40. Interacts with AFG3L2. Interacts with DNAJC19. Interacts with AKT2; this interaction may be important for myogenic differentiation. Post-translationally, phosphorylated. Tyrosine phosphorylation is indirectly stimulated by IGFBP6. Widely expressed in different tissues.

The protein localises to the mitochondrion inner membrane. It localises to the cytoplasm. It is found in the nucleus. The protein resides in the cell membrane. In terms of biological role, protein with pleiotropic attributes mediated in a cell-compartment- and tissue-specific manner, which include the plasma membrane-associated cell signaling functions, mitochondrial chaperone, and transcriptional co-regulator of transcription factors and sex steroid hormones in the nucleus. Its function is as follows. In the mitochondria, together with PHB, forms large ring complexes (prohibitin complexes) in the inner mitochondrial membrane (IMM) and functions as a chaperone protein that stabilizes mitochondrial respiratory enzymes and maintains mitochondrial integrity in the IMM, which is required for mitochondrial morphogenesis, neuronal survival, and normal lifespan. The prohibitin complex, with DNAJC19, regulates cardiolipin remodeling and the protein turnover of OMA1 in a cardiolipin-binding manner. Also regulates cytochrome-c oxidase assembly (COX) and mitochondrial respiration. Binding to sphingoid 1-phosphate (SPP) modulates its regulator activity. Has a key role of mitophagy receptor involved in targeting mitochondria for autophagic degradation. Involved in mitochondrial-mediated antiviral innate immunity, activates RIG-I-mediated signal transduction and production of IFNB1 and pro-inflammatory cytokine IL6. In the nucleus, serves as transcriptional co-regulator. Acts as a mediator of transcriptional repression by nuclear hormone receptors via recruitment of histone deacetylases. Functions as an estrogen receptor (ER)-selective coregulator that potentiates the inhibitory activities of antiestrogens and represses the activity of estrogens. Competes with NCOA1 for modulation of ER transcriptional activity. Functionally, in the plasma membrane, is involved in IGFBP6-induced cell migration. Cooperates with CD86 to mediate CD86-signaling in B lymphocytes that regulates the level of IgG1 produced through the activation of distal signaling intermediates. Upon CD40 engagement, required to activate NF-kappa-B signaling pathway via phospholipase C and protein kinase C activation. The chain is Prohibitin-2 from Mus musculus (Mouse).